The chain runs to 335 residues: Trans-3-hydroxy-L-proline dehydratase (335 aa).

The active-site Proton acceptor is Cys-91. Residues 92 to 93, Asp-251, and 256 to 257 contribute to the substrate site; these read GH and GS.

Belongs to the proline racemase family.

It catalyses the reaction trans-3-hydroxy-L-proline = 1-pyrroline-2-carboxylate + H2O. Its function is as follows. Catalyzes the dehydration of trans-3-hydroxy-L-proline (t3LHyp) to Delta(1)-pyrroline-2-carboxylate (Pyr2C). Is likely involved in a degradation pathway that converts t3LHyp to L-proline. Displays neither trans-4-hydroxy-L-proline (t4LHyp) epimerase nor proline racemase activity. The sequence is that of Trans-3-hydroxy-L-proline dehydratase from Burkholderia ambifaria (strain ATCC BAA-244 / DSM 16087 / CCUG 44356 / LMG 19182 / AMMD) (Burkholderia cepacia (strain AMMD)).